We begin with the raw amino-acid sequence, 319 residues long: Cobalamin biosynthesis protein CbiB (319 aa).

Helical transmembrane passes span 56 to 76 (VMWI…LALA), 82 to 102 (WLGW…RSLA), 153 to 173 (VDGI…LAMA), 204 to 224 (VANY…AGLC), and 296 to 316 (LMWG…CWLS).

It belongs to the CobD/CbiB family.

It is found in the cell membrane. Its pathway is cofactor biosynthesis; adenosylcobalamin biosynthesis. Converts cobyric acid to cobinamide by the addition of aminopropanol on the F carboxylic group. However, the true cosubstrate could be (R)-1-amino-2-propanol O-2-phosphate, leading to cobinamide phosphate. The protein is Cobalamin biosynthesis protein CbiB of Salmonella arizonae (strain ATCC BAA-731 / CDC346-86 / RSK2980).